The sequence spans 801 residues: Growth-differentiation transition protein 7 (801 aa).

The signal sequence occupies residues 1 to 22 (MIKTILIKLILLVIFCYHFLFA).

This sequence belongs to the GDT family.

The protein localises to the secreted. This chain is Growth-differentiation transition protein 7 (gdt7), found in Dictyostelium discoideum (Social amoeba).